The chain runs to 590 residues: L-fucose isomerase (590 aa).

Active-site proton acceptor residues include E337 and D361. Mn(2+)-binding residues include E337, D361, and H528.

The protein belongs to the L-fucose isomerase family. Requires Mn(2+) as cofactor.

Its subcellular location is the cytoplasm. It catalyses the reaction L-fucose = L-fuculose. The protein operates within carbohydrate degradation; L-fucose degradation; L-lactaldehyde and glycerone phosphate from L-fucose: step 1/3. Converts the aldose L-fucose into the corresponding ketose L-fuculose. The protein is L-fucose isomerase of Bacteroides fragilis (strain YCH46).